Here is an 81-residue protein sequence, read N- to C-terminus: MPKRIMKGVVVSAKQDKTAIVRVERTFTHPMLKKIVRKTNKYHAHDENNVAVEGQTIAIRECAPKSKLKRWEVVAEEGTEA.

This sequence belongs to the universal ribosomal protein uS17 family. Part of the 30S ribosomal subunit.

In terms of biological role, one of the primary rRNA binding proteins, it binds specifically to the 5'-end of 16S ribosomal RNA. The protein is Small ribosomal subunit protein uS17 of Hyphomonas neptunium (strain ATCC 15444).